Consider the following 153-residue polypeptide: MTSLLLFGASEGGLFDFDATLPLMAAQVVLLTFILNALFFKPVGRVVEDREDYVLTSRAEAKKKLAEVEKLENDLKNQLKEARKAAQQVISEAEEDSEKLYKEALNLANSEANASREQARREIDSQRDSALKKLKSDSDKLGDLIVERLLAAK.

The chain crosses the membrane as a helical span at residues 20 to 40 (TLPLMAAQVVLLTFILNALFF).

The protein belongs to the ATPase B chain family. F-type ATPases have 2 components, F(1) - the catalytic core - and F(0) - the membrane proton channel. F(1) has five subunits: alpha(3), beta(3), gamma(1), delta(1), epsilon(1). F(0) has four main subunits: a(1), b(1), b'(1) and c(10-14). The alpha and beta chains form an alternating ring which encloses part of the gamma chain. F(1) is attached to F(0) by a central stalk formed by the gamma and epsilon chains, while a peripheral stalk is formed by the delta, b and b' chains.

It is found in the cellular thylakoid membrane. Its function is as follows. F(1)F(0) ATP synthase produces ATP from ADP in the presence of a proton or sodium gradient. F-type ATPases consist of two structural domains, F(1) containing the extramembraneous catalytic core and F(0) containing the membrane proton channel, linked together by a central stalk and a peripheral stalk. During catalysis, ATP synthesis in the catalytic domain of F(1) is coupled via a rotary mechanism of the central stalk subunits to proton translocation. Functionally, component of the F(0) channel, it forms part of the peripheral stalk, linking F(1) to F(0). The b'-subunit is a diverged and duplicated form of b found in plants and photosynthetic bacteria. The polypeptide is ATP synthase subunit b' (Prochlorococcus marinus (strain SARG / CCMP1375 / SS120)).